The chain runs to 314 residues: Putative methylthioribose-1-phosphate isomerase (314 aa).

Substrate is bound by residues 45–47 (RGA), Arg79, and Gln177. Asp218 acts as the Proton donor in catalysis. 227-228 (NK) lines the substrate pocket.

Belongs to the eIF-2B alpha/beta/delta subunits family. MtnA subfamily.

The catalysed reaction is 5-(methylsulfanyl)-alpha-D-ribose 1-phosphate = 5-(methylsulfanyl)-D-ribulose 1-phosphate. Functionally, catalyzes the interconversion of methylthioribose-1-phosphate (MTR-1-P) into methylthioribulose-1-phosphate (MTRu-1-P). This Methanosphaera stadtmanae (strain ATCC 43021 / DSM 3091 / JCM 11832 / MCB-3) protein is Putative methylthioribose-1-phosphate isomerase.